A 539-amino-acid polypeptide reads, in one-letter code: Netrin-G1 (539 aa).

The first 28 residues, 1-28 (MYLSRFLSIHALWVTVSSVMQPYPLVWG), serve as a signal peptide directing secretion. 3 disulfide bridges follow: C33–C50, C72–C92, and C80–C88. In terms of domain architecture, Laminin N-terminal spans 46–296 (DYMACQPEST…AISDIKVRGR (251 aa)). The tract at residues 80–91 (CAMGNPYMCNNE) is NGL discriminant loop I. The N-linked (GlcNAc...) asparagine glycan is linked to N133. Residues C182 and C206 are joined by a disulfide bond. Positions 208–214 (EEYSTGY) are NGL discriminant loop II. The tract at residues 273–275 (EIF) is NGL discriminant loop III. Intrachain disulfides connect C297/C306, C299/C315, C317/C326, C329/C354, C364/C373, C366/C384, C387/C396, C399/C417, C420/C432, C422/C438, C440/C449, C452/C462, C467/C480, C474/C486, and C488/C497. Laminin EGF-like domains lie at 297–356 (CKCN…TCIP), 364–419 (CECF…VCIE), and 420–469 (CYCN…VCDN). N320 carries an N-linked (GlcNAc...) asparagine glycan. A glycan (N-linked (GlcNAc...) asparagine) is linked at N406. A glycan (N-linked (GlcNAc...) asparagine) is linked at N433. S510 carries the GPI-anchor amidated serine lipid modification. Residues 511-539 (DSGQGAPPHGSPALLLLTTLLGTASPLVF) constitute a propeptide, removed in mature form.

As to quaternary structure, interacts with NGL1. Post-translationally, N-glycosylated. As to expression, highly expressed in the thalamus, with very low expression, if any, in other tissues.

It is found in the cell membrane. Its function is as follows. Involved in controlling patterning and neuronal circuit formation at the laminar, cellular, subcellular and synaptic levels. Promotes neurite outgrowth of both axons and dendrites. This chain is Netrin-G1 (NTNG1), found in Homo sapiens (Human).